Reading from the N-terminus, the 569-residue chain is CTP synthase (569 aa).

The tract at residues 1-272 (MARPKNVKHI…DSRVLKKLGI (272 aa)) is amidoligase domain. Serine 18 contacts CTP. Residue serine 18 coordinates UTP. Position 19–24 (19–24 (SLGKGI)) interacts with ATP. L-glutamine is bound at residue tyrosine 59. An ATP-binding site is contributed by aspartate 76. Positions 76 and 146 each coordinate Mg(2+). Residues 153-155 (DIE), 193-198 (KTKPTQ), and lysine 229 contribute to the CTP site. UTP-binding positions include 193-198 (KTKPTQ) and lysine 229. The Glutamine amidotransferase type-1 domain occupies 299–543 (TIGICGKYTE…VAAAKDYARG (245 aa)). Glycine 363 is a binding site for L-glutamine. Cysteine 390 (nucleophile; for glutamine hydrolysis) is an active-site residue. L-glutamine is bound by residues 391-394 (LGMQ), glutamate 414, and arginine 471. Catalysis depends on residues histidine 516 and glutamate 518.

The protein belongs to the CTP synthase family. Homotetramer.

The enzyme catalyses UTP + L-glutamine + ATP + H2O = CTP + L-glutamate + ADP + phosphate + 2 H(+). The catalysed reaction is L-glutamine + H2O = L-glutamate + NH4(+). It catalyses the reaction UTP + NH4(+) + ATP = CTP + ADP + phosphate + 2 H(+). Its pathway is pyrimidine metabolism; CTP biosynthesis via de novo pathway; CTP from UDP: step 2/2. Allosterically activated by GTP, when glutamine is the substrate; GTP has no effect on the reaction when ammonia is the substrate. The allosteric effector GTP functions by stabilizing the protein conformation that binds the tetrahedral intermediate(s) formed during glutamine hydrolysis. Inhibited by the product CTP, via allosteric rather than competitive inhibition. Catalyzes the ATP-dependent amination of UTP to CTP with either L-glutamine or ammonia as the source of nitrogen. Regulates intracellular CTP levels through interactions with the four ribonucleotide triphosphates. In Chlorobium chlorochromatii (strain CaD3), this protein is CTP synthase.